The following is a 325-amino-acid chain: GMP reductase (325 aa).

Cys173 acts as the Thioimidate intermediate in catalysis. 202–225 (IIADGGIRSHGDIAKSVRFGATMV) is an NADP(+) binding site.

The protein belongs to the IMPDH/GMPR family. GuaC type 2 subfamily.

It catalyses the reaction IMP + NH4(+) + NADP(+) = GMP + NADPH + 2 H(+). Functionally, catalyzes the irreversible NADPH-dependent deamination of GMP to IMP. It functions in the conversion of nucleobase, nucleoside and nucleotide derivatives of G to A nucleotides, and in maintaining the intracellular balance of A and G nucleotides. The protein is GMP reductase of Acidovorax sp. (strain JS42).